The chain runs to 160 residues: Nucleotide-binding protein CPS_1098 (160 aa).

The protein belongs to the YajQ family.

Functionally, nucleotide-binding protein. This chain is Nucleotide-binding protein CPS_1098, found in Colwellia psychrerythraea (strain 34H / ATCC BAA-681) (Vibrio psychroerythus).